A 43-amino-acid chain; its full sequence is Protein PsbN (43 aa).

The chain crosses the membrane as a helical span at residues T5–F27.

The protein belongs to the PsbN family.

Its subcellular location is the plastid. It is found in the chloroplast thylakoid membrane. Its function is as follows. May play a role in photosystem I and II biogenesis. The chain is Protein PsbN from Pinus koraiensis (Korean pine).